The following is a 329-amino-acid chain: Ankyrin repeat and SOCS box protein 5 (329 aa).

ANK repeat units follow at residues 69–98 (ADRSPLHEAASQGRLLALRTLLSQGYNVNA), 102–131 (DHVTPLHEACLGDHVACARTLLEAGANANA), 135–164 (DGVTPLFNACSQGSASCAELLLEYGAKAQL), 167–196 (CFPSPTHEAASKGHHECLDILIAWGIDVDQ), 200–229 (HLGTPLYVACMSQQFHCIWKLLYAGADVHK), and 232–261 (YWDTPLHAAAQQPSTEIVNLLLEFGADINA). Positions 278–329 (AVERILLQHEATPSSLCQLCRLCIRNYIGRQRFHLIPQLQLPTLLQNFLQYR) constitute an SOCS box domain.

Belongs to the ankyrin SOCS box (ASB) family.

The protein operates within protein modification; protein ubiquitination. In terms of biological role, may be a substrate-recognition component of a SCF-like ECS (Elongin-Cullin-SOCS-box protein) E3 ubiquitin-protein ligase complex which mediates the ubiquitination and subsequent proteasomal degradation of target proteins. May play a role in the initiation of arteriogenesis. The protein is Ankyrin repeat and SOCS box protein 5 (Asb5) of Mus musculus (Mouse).